A 363-amino-acid polypeptide reads, in one-letter code: 3-dehydroquinate synthase (363 aa).

Residues Gly-103–Asp-107, Thr-127–Thr-128, Lys-139, Lys-148, and Phe-166–Thr-169 contribute to the NAD(+) site. Zn(2+) is bound by residues Glu-181, His-243, and His-260.

The protein belongs to the sugar phosphate cyclases superfamily. Dehydroquinate synthase family. Requires Co(2+) as cofactor. Zn(2+) serves as cofactor. The cofactor is NAD(+).

The protein resides in the cytoplasm. It catalyses the reaction 7-phospho-2-dehydro-3-deoxy-D-arabino-heptonate = 3-dehydroquinate + phosphate. It participates in metabolic intermediate biosynthesis; chorismate biosynthesis; chorismate from D-erythrose 4-phosphate and phosphoenolpyruvate: step 2/7. In terms of biological role, catalyzes the conversion of 3-deoxy-D-arabino-heptulosonate 7-phosphate (DAHP) to dehydroquinate (DHQ). The sequence is that of 3-dehydroquinate synthase from Lysinibacillus sphaericus (strain C3-41).